Here is a 1310-residue protein sequence, read N- to C-terminus: MSVTTNAVADAFAVFDVTPDPDELARKNKKPDDSGSVTVRQLYRYANWLDLILLAVGIFGSIGCGVLTPCQMLVMGDMVDTFNTNDLMKAFPNQEAMYDPKYYIPFNHEVTKTVADTINDLVLKMVCFAIGSGVGSFLMTFCFFVMSERQGIKIRMLYFRALLRQDAGWYDFHESGELTSRIASDVQQIQDGMSQKFGIIFQTTTSFIAGYAIGFAKDWDLTLVIMSMSPFIVLSMTLLAVFATKFTVLGEESLGNAGAIAEATIGNMRTVHSLGQEHEFCEMYNEKIRVVDRYNVLKGLTVGLGLGAVMFFIMGAFSLGSWYASVVLRGKGGKKNVTAGDVMIVFICVLIATQGLSIIAIPLNIFATAKASAYRIYQTIDRIPDIDCRSTAGECPTECNGNITLEDVQFRYPTRPTKQILGGLDLEIKKGQTVALVGASGCGKSTTIQLVQRNYDPVGGSVKLDGKDLRDLNIKWLRNQIGLVGQEPILFACTIRENIMLGARDGETPTEEEMIECAKMANAHEFISHLPEGYDTMVGEKGAALSGGQKQRIAIARALIRKPTILLLDEATSALDTQSEKIVQQALEKASQGRTTIVVAHRLTTVRNASRICVFHQGEIIEQGTHQELMDLKGTYYGLVKRQSMEEEVDQETVENDLKKIREQENKEAEEINQHKNTDTNEDPDIVQKLENEYNSEMKKLKHSNRFVLLRVILDNFRHEWFLSTFGFIGGIGGGAIFPFFTLKIVDLIMCLLSINSDTLTDDQKDTIKNICIIVVVIGVASFLSFFMYIGLFLSAGFKMIGRVRKDMYHSIMHQNISWFDRKENMVGSLTTRLASDPTTLQGISGERVGNVIHIISTIGFALGIAFYYDWKVSLAVMAVSPVLIVVVFINGKLNSLEACPAQAAYEKSGITLVEAVESVRTVQSLTREEHFYEVFKDALREPKIGIYKWAPLLSIFMCLTTLLTQVMNPYGFYIGTYLIKKKSNYDLPVPDFMIEFSDRFEEMQKAIMAVIFAAQAVGNLGNIVPDIGKAVRAAKNTYDVIDRKPTIDCYSEEGETFNDVKGEIEFKDICFRYPTRPDNSVLKGISFKVEQGKTVALVGASGCGKSTSVQLIERFYDPTHGDVLLDGHNIKDLNIHFLRSQIGMVGQEPVLFAESVMDNIRRGVPKGVEVSNEQIYAAAKMANAHDFISAMPEGYNTMVGDRGAQISGGQKQRIAIARALIRNPKVLLLDEATSALDSESEKIVQDALDKAAKGRTTIVIAHRLSTIQNADQICVIMRGRIAERGTHQELLDLKGFYYTLAMQQFGTVD.

The next 5 helical transmembrane spans lie at 48–68, 125–145, 196–216, 223–243, and 299–319; these read WLDL…GVLT, MVCF…CFFV, KFGI…IGFA, LVIM…AVFA, and GLTV…AFSL. The region spanning 55–368 is the ABC transmembrane type-1 1 domain; it reads AVGIFGSIGC…IAIPLNIFAT (314 aa). A glycan (N-linked (GlcNAc...) asparagine) is linked at N336. A helical transmembrane segment spans residues 342–362; the sequence is VMIVFICVLIATQGLSIIAIP. The N-linked (GlcNAc...) asparagine glycan is linked to N402. One can recognise an ABC transporter 1 domain in the interval 403–642; sequence ITLEDVQFRY…KGTYYGLVKR (240 aa). Residue 438–445 participates in ATP binding; sequence GASGCGKS. N608 carries an N-linked (GlcNAc...) asparagine glycan. 2 helical membrane passes run 721 to 741 and 773 to 793; these read WFLS…FPFF and IIVV…IGLF. One can recognise an ABC transmembrane type-1 2 domain in the interval 722-1030; the sequence is FLSTFGFIGG…LGNIVPDIGK (309 aa). N-linked (GlcNAc...) asparagine glycosylation is present at N816. The next 3 membrane-spanning stretches (helical) occupy residues 849 to 869, 871 to 891, and 945 to 965; these read VGNV…AFYY, WKVS…VFIN, and IGIY…TLLT. Positions 1065 to 1304 constitute an ABC transporter 2 domain; it reads IEFKDICFRY…KGFYYTLAMQ (240 aa). Residue 1100-1107 participates in ATP binding; that stretch reads GASGCGKS.

This sequence belongs to the ABC transporter superfamily. ABCB family. Multidrug resistance exporter (TC 3.A.1.201) subfamily.

The protein localises to the membrane. The catalysed reaction is ATP + H2O + xenobioticSide 1 = ADP + phosphate + xenobioticSide 2.. Energy-dependent efflux pump responsible for decreased drug accumulation in multidrug resistance parasites. In Entamoeba histolytica (strain ATCC 30459 / HM-1:IMSS / ABRM), this protein is Multidrug resistance protein 4.